A 331-amino-acid chain; its full sequence is Aldo-keto reductase family 7 member A3 (331 aa).

At Ser6 the chain carries Phosphoserine. NADPH is bound by residues Met17, Asp44, and Tyr49. Tyr49 (proton donor) is an active-site residue. Ser85 is modified (phosphoserine). NADPH contacts are provided by His113, Ser143, Asn144, Asn198, Leu200, Gly202, Lys208, Tyr209, and Arg222. Thr227 bears the Phosphothreonine mark. 3 residues coordinate NADPH: Ser290, Gln294, and Asn298.

The protein belongs to the aldo/keto reductase family. Aldo/keto reductase 2 subfamily. As to quaternary structure, homodimer. As to expression, expressed in colon, kidney, liver, pancreas, adenocarcinoma and endometrium.

It is found in the cytoplasm. The catalysed reaction is a primary alcohol + NADP(+) = an aldehyde + NADPH + H(+). The enzyme catalyses aflatoxin B1 dialdehyde + NADPH + H(+) = aflatoxin B1 C(6a)-monoaldehyde + NADP(+). It catalyses the reaction aflatoxin B1 dialdehyde + NADPH + H(+) = aflatoxin B1 C(8)-monoaldehyde + NADP(+). It carries out the reaction aflatoxin B1 C(6a)-monoaldehyde + NADPH + 2 H(+) = aflatoxin B1 triol + NADP(+). With respect to regulation, inhibited by citrate. Functionally, catalyzes the NADPH-dependent reduction of various carbonyl-containing compounds, including aldehydes, ketones, and toxic products from cellular metabolism or environmental exposure. Can reduce the dialdehyde form of aflatoxin B1 (AFB1) into alcohol derivatives, via monoaldehydes intermediates. Can reduce the dialdehyde form of aflatoxin B1 (AFB1) into alcohol derivatives, via monoaldehydes intermediates, thus preventing the formation of protein adducts that contribute to AFB1-induced toxicity. This is Aldo-keto reductase family 7 member A3 from Homo sapiens (Human).